The sequence spans 412 residues: MGAMFFGLMLFTLGWTLIDGSESEQDFMWHVRKIPRLVSERTFHLTSPAFEADAKMVLNRVCGIECQKDLPAPSLSDLEDSLSYETVFENGSRTLTRVKVQGWVPEPTQNLTSQGAPVRRKRQVYGTDSRFSILDKKFLTNFPFNTAVKLSTGCSGILISPNHVLTAAHCVHDGNGYIKGSKKLRVGLLKMRNKGGGKRRRGSRRNRREVSGAGREGSQDSLKETAKAGRRRKGSARRQRAADGRPSFQWTRVKNTHIPKGWARGESRDPALDYDYALLELKRPHKKKYMELGVSPTIKKLPGGMIHFSGFDQDRADQLVYRFCSVSDESNDLLYQYCDAESGSTGSGVYLRLKEPDKKRWKRKIIAIYSGHQWVDVHGVQKDYNVAVRITPLKYAQICLWMHGDDANCTQG.

An N-terminal signal peptide occupies residues 1 to 23; that stretch reads MGAMFFGLMLFTLGWTLIDGSES. Asparagine 110 carries an N-linked (GlcNAc...) asparagine glycan. One can recognise a Peptidase S1 domain in the interval 124-407; the sequence is VYGTDSRFSI…ICLWMHGDDA (284 aa). A disulfide bridge connects residues cysteine 154 and cysteine 170. A compositionally biased stretch (basic residues) spans 192–207; it reads RNKGGGKRRRGSRRNR. Residues 192–246 form a disordered region; it reads RNKGGGKRRRGSRRNRREVSGAGREGSQDSLKETAKAGRRRKGSARRQRAADGRP. A compositionally biased stretch (basic and acidic residues) spans 217-227; the sequence is GSQDSLKETAK. The span at 228–239 shows a compositional bias: basic residues; the sequence is AGRRRKGSARRQ.

It belongs to the peptidase S1 family.

The protein resides in the secreted. This is Inactive serine protease 35 (PRSS35) from Bos taurus (Bovine).